Reading from the N-terminus, the 118-residue chain is Ferredoxin-thioredoxin reductase, catalytic chain (118 aa).

Residue Cys-57 participates in [4Fe-4S] cluster binding. Catalysis depends on Cys-59, which acts as the Nucleophile. Cysteines 59 and 89 form a disulfide. [4Fe-4S] cluster is bound by residues Cys-76, Cys-78, and Cys-87.

The protein belongs to the ferredoxin thioredoxin reductase beta subunit family. In terms of assembly, heterodimer of subunit A (variable subunit) and subunit B (catalytic subunit). Heterodimeric FTR forms a complex with ferredoxin and thioredoxin. It depends on [4Fe-4S] cluster as a cofactor.

The protein resides in the plastid. The protein localises to the chloroplast. It carries out the reaction [thioredoxin]-disulfide + 2 reduced [2Fe-2S]-[ferredoxin] + 2 H(+) = [thioredoxin]-dithiol + 2 oxidized [2Fe-2S]-[ferredoxin]. Its function is as follows. Catalytic subunit of the ferredoxin-thioredoxin reductase (FTR), which catalyzes the two-electron reduction of thioredoxins by the electrons provided by reduced ferredoxin. This is Ferredoxin-thioredoxin reductase, catalytic chain (ftrB) from Porphyra purpurea (Red seaweed).